A 95-amino-acid polypeptide reads, in one-letter code: MSVDAATVRRIAHLARIAVDDAEVPHLQDELNAILAFVEQLQEVNVDGVEPMTSVTPMAMKMRTDVVNDGEIADRIVANAPVTHDHFFLVPKVVE.

This sequence belongs to the GatC family. As to quaternary structure, heterotrimer of A, B and C subunits.

The catalysed reaction is L-glutamyl-tRNA(Gln) + L-glutamine + ATP + H2O = L-glutaminyl-tRNA(Gln) + L-glutamate + ADP + phosphate + H(+). It catalyses the reaction L-aspartyl-tRNA(Asn) + L-glutamine + ATP + H2O = L-asparaginyl-tRNA(Asn) + L-glutamate + ADP + phosphate + 2 H(+). Its function is as follows. Allows the formation of correctly charged Asn-tRNA(Asn) or Gln-tRNA(Gln) through the transamidation of misacylated Asp-tRNA(Asn) or Glu-tRNA(Gln) in organisms which lack either or both of asparaginyl-tRNA or glutaminyl-tRNA synthetases. The reaction takes place in the presence of glutamine and ATP through an activated phospho-Asp-tRNA(Asn) or phospho-Glu-tRNA(Gln). This Nitrobacter winogradskyi (strain ATCC 25391 / DSM 10237 / CIP 104748 / NCIMB 11846 / Nb-255) protein is Aspartyl/glutamyl-tRNA(Asn/Gln) amidotransferase subunit C.